Here is a 1241-residue protein sequence, read N- to C-terminus: Nephrin (1241 aa).

The signal sequence occupies residues 1–22 (MALGTTLRASLLLLGLLTEGLA). The Extracellular segment spans residues 23-1055 (QLAIPASVPR…EDQLPTEPPS (1033 aa)). 6 consecutive Ig-like C2-type domains span residues 27 to 130 (PASV…VILS), 143 to 234 (EAGT…SFTV), 242 to 333 (PPVI…HGIT), 340 to 434 (PSAI…KSLI), 440 to 540 (PAQK…TQLA), and 544 to 635 (PPTN…ETVS). Asn-40 carries an N-linked (GlcNAc...) asparagine glycan. 3 disulfide bridges follow: Cys-53–Cys-111, Cys-160–Cys-217, and Cys-265–Cys-317. N-linked (GlcNAc...) asparagine glycosylation is found at Asn-356 and Asn-401. A disulfide bridge links Cys-361 with Cys-417. Ser-432 carries the phosphoserine modification. A disulfide bridge connects residues Cys-465 and Cys-528. N-linked (GlcNAc...) asparagine glycans are attached at residues Asn-547, Asn-553, Asn-564, Asn-577, Asn-680, and Asn-708. The cysteines at positions 567 and 623 are disulfide-linked. 2 consecutive Ig-like C2-type domains span residues 740–832 (PTIR…LLRL) and 838–939 (PQVE…VSIS). Cystine bridges form between Cys-761–Cys-816 and Cys-863–Cys-920. An N-linked (GlcNAc...) asparagine glycan is attached at Asn-908. Residues 943 to 1038 (PPSGLKVVSL…TQLPITTPGL (96 aa)) enclose the Fibronectin type-III domain. Residues 1025–1057 (ADKGTQLPITTPGLHQPSGEPEDQLPTEPPSGP) form a disordered region. A helical membrane pass occupies residues 1056–1076 (GPSGLPLLPVLFALGGLLLLS). The Cytoplasmic portion of the chain corresponds to 1077–1241 (NASCVGGVLW…LPFELRGHLV (165 aa)). Residue Ser-1098 is modified to Phosphoserine. A compositionally biased stretch (basic and acidic residues) spans 1099–1114 (EKTEAGSEEDRVRNEY). A disordered region spans residues 1099 to 1137 (EKTEAGSEEDRVRNEYEESQWTGERDTQSSTVSTTEAEP). A Phosphothreonine modification is found at Thr-1101. Ser-1105 carries the phosphoserine modification. The binds to NPHS2 stretch occupies residues 1160-1241 (RGFTGEDEDM…LPFELRGHLV (82 aa)). Tyr-1193 is subject to Phosphotyrosine; by FYN.

This sequence belongs to the immunoglobulin superfamily. Interacts with CD2AP (via C-terminal domain). Interacts with MAGI1 (via PDZ 2 and 3 domains) forming a tripartite complex with IGSF5/JAM4. Interacts with DDN; the interaction is direct. Self-associates (via the Ig-like domains). Also interacts (via the Ig-like domains) with KIRREL1/NEPH1 and KIRREL2; the interaction with KIRREL1 is dependent on KIRREL1 glycosylation. Interacts with KIRREL3. Forms a complex with ACTN4, CASK, IQGAP1, MAGI2, SPTAN1 and SPTBN1. Interacts with NPHS2. Interacts with phosphatidylinositol 3-kinase regulatory subunit PIK3R1; the interaction is reduced by high glucose levels. Phosphorylated at Tyr-1193 by FYN, leading to the recruitment and activation of phospholipase C-gamma-1/PLCG1. Tyrosine phosphorylation is reduced by high glucose levels. Dephosphorylated by tensin TNS2 which leads to reduced binding of NPHN1 to PIK3R1. As to expression, specifically expressed in podocytes of kidney glomeruli.

It is found in the cell membrane. Functionally, seems to play a role in the development or function of the kidney glomerular filtration barrier. Regulates glomerular vascular permeability. May anchor the podocyte slit diaphragm to the actin cytoskeleton. Plays a role in skeletal muscle formation through regulation of myoblast fusion. The protein is Nephrin (NPHS1) of Homo sapiens (Human).